The following is a 295-amino-acid chain: Protoheme IX farnesyltransferase (295 aa).

The next 9 membrane-spanning stretches (helical) occupy residues 8 to 28 (VTKP…FLLA), 35 to 55 (YPLF…GCVF), 74 to 94 (VLVK…VLGI), 98 to 118 (LLLY…GFVI), 132 to 152 (VYGT…GYCA), 162 to 182 (LILL…IAIF), 208 to 228 (ITLY…SGYA), 233 to 253 (LVVA…GYKA), and 264 to 284 (FVFS…DFNV).

The protein belongs to the UbiA prenyltransferase family. Protoheme IX farnesyltransferase subfamily.

It localises to the cell inner membrane. The enzyme catalyses heme b + (2E,6E)-farnesyl diphosphate + H2O = Fe(II)-heme o + diphosphate. It participates in porphyrin-containing compound metabolism; heme O biosynthesis; heme O from protoheme: step 1/1. Converts heme B (protoheme IX) to heme O by substitution of the vinyl group on carbon 2 of heme B porphyrin ring with a hydroxyethyl farnesyl side group. In Yersinia pseudotuberculosis serotype O:1b (strain IP 31758), this protein is Protoheme IX farnesyltransferase.